The chain runs to 176 residues: Large ribosomal subunit protein uL6 (176 aa).

This sequence belongs to the universal ribosomal protein uL6 family. As to quaternary structure, part of the 50S ribosomal subunit.

Its function is as follows. This protein binds to the 23S rRNA, and is important in its secondary structure. It is located near the subunit interface in the base of the L7/L12 stalk, and near the tRNA binding site of the peptidyltransferase center. The protein is Large ribosomal subunit protein uL6 of Methanothrix thermoacetophila (strain DSM 6194 / JCM 14653 / NBRC 101360 / PT) (Methanosaeta thermophila).